Reading from the N-terminus, the 407-residue chain is Succinate--CoA ligase [ADP-forming] subunit beta, hydrogenosomal (407 aa).

The N-terminal 9 residues, 1-9 (MLSSSFARN), are a transit peptide targeting the hydrogenosome. In terms of domain architecture, ATP-grasp spans 18-261 (KEICAKYNVA…LKQVNPFEIR (244 aa)). Residues lysine 55, 62–64 (GRG), and glutamate 124 contribute to the ATP site. Positions 216 and 230 each coordinate Mg(2+). Residues asparagine 281 and 338–340 (GIV) contribute to the substrate site.

This sequence belongs to the succinate/malate CoA ligase beta subunit family. In terms of assembly, heterodimer of an alpha and a beta subunit. It depends on Mg(2+) as a cofactor.

It is found in the hydrogenosome. The enzyme catalyses succinate + ATP + CoA = succinyl-CoA + ADP + phosphate. Its pathway is carbohydrate metabolism; tricarboxylic acid cycle; succinate from succinyl-CoA (ligase route): step 1/1. Its function is as follows. Succinyl-CoA synthetase functions in the citric acid cycle (TCA), coupling the hydrolysis of succinyl-CoA to the synthesis of ATP and thus represents the only step of substrate-level phosphorylation in the TCA. The beta subunit provides nucleotide specificity of the enzyme and binds the substrate succinate, while the binding sites for coenzyme A and phosphate are found in the alpha subunit. In Trichomonas vaginalis, this protein is Succinate--CoA ligase [ADP-forming] subunit beta, hydrogenosomal.